A 130-amino-acid polypeptide reads, in one-letter code: Small ribosomal subunit protein uS9 (130 aa).

The protein belongs to the universal ribosomal protein uS9 family.

The protein is Small ribosomal subunit protein uS9 of Anaeromyxobacter dehalogenans (strain 2CP-1 / ATCC BAA-258).